A 1000-amino-acid polypeptide reads, in one-letter code: SEC23-interacting protein (1000 aa).

The interaction with SEC23A stretch occupies residues 1 to 367 (MAERKPNGGS…YTEEFSEKLE (367 aa)). The segment at 133 to 252 (FSPSISKAQP…QQVPARPGAP (120 aa)) is disordered. The segment covering 154–167 (SYLPSQPSSLPPSY) has biased composition (low complexity). A compositionally biased stretch (pro residues) spans 207-218 (PGPPAHPPPSGP). Low complexity predominate over residues 235-246 (SSVQSPAQQQVP). The SAM domain maps to 644–707 (KEVLTLQETL…NFVEHKAAKL (64 aa)). Residues 716–748 (AVAATSTKGQEQSAQKTKDMASLPSESNEPKRK) form a disordered region. Phosphoserine occurs at positions 737 and 926. The DDHD domain maps to 779 to 989 (LDFEPEIFFA…ALLLLKEIYR (211 aa)).

This sequence belongs to the PA-PLA1 family. As to quaternary structure, interacts with SEC23A. Ubiquitously expressed with stronger levels detected in heart, liver and skeletal muscle.

The protein localises to the cytoplasmic vesicle. Its subcellular location is the COPII-coated vesicle membrane. It localises to the endoplasmic reticulum. In terms of biological role, plays a role in the organization of endoplasmic reticulum exit sites. Specifically binds to phosphatidylinositol 3-phosphate (PI(3)P), phosphatidylinositol 4-phosphate (PI(4)P) and phosphatidylinositol 5-phosphate (PI(5)P). This is SEC23-interacting protein (SEC23IP) from Homo sapiens (Human).